Reading from the N-terminus, the 154-residue chain is MAADPKDTTVTDENTETAATAEVETVASAPTSPAQKLSAEALIKAFETEQMKSDLPEIYVGDTVRVGVRISEGNKERVQPYEGVVISKRHGGMNQTITVRRIFQGIGVERVFMLHSPQVANIKVERRGKVRRAKLFYLRERVGKATRVKQRFDR.

Residues 1–33 (MAADPKDTTVTDENTETAATAEVETVASAPTSP) are disordered. Low complexity predominate over residues 16–27 (ETAATAEVETVA).

It belongs to the bacterial ribosomal protein bL19 family.

This protein is located at the 30S-50S ribosomal subunit interface and may play a role in the structure and function of the aminoacyl-tRNA binding site. This Parasynechococcus marenigrum (strain WH8102) protein is Large ribosomal subunit protein bL19.